A 154-amino-acid chain; its full sequence is Myoglobin (154 aa).

Residues 2-148 enclose the Globin domain; sequence GLSDGEWTLV…FRNDMAAQYK (147 aa). Ser-4 bears the Phosphoserine mark. His-65 provides a ligand contact to nitrite. His-65 is a binding site for O2. A Phosphothreonine modification is found at Thr-68. His-94 is a binding site for heme b.

This sequence belongs to the globin family. As to quaternary structure, monomeric.

It localises to the cytoplasm. Its subcellular location is the sarcoplasm. The catalysed reaction is Fe(III)-heme b-[protein] + nitric oxide + H2O = Fe(II)-heme b-[protein] + nitrite + 2 H(+). It carries out the reaction H2O2 + AH2 = A + 2 H2O. Its function is as follows. Monomeric heme protein which primary function is to store oxygen and facilitate its diffusion within muscle tissues. Reversibly binds oxygen through a pentacoordinated heme iron and enables its timely and efficient release as needed during periods of heightened demand. Depending on the oxidative conditions of tissues and cells, and in addition to its ability to bind oxygen, it also has a nitrite reductase activity whereby it regulates the production of bioactive nitric oxide. Under stress conditions, like hypoxia and anoxia, it also protects cells against reactive oxygen species thanks to its pseudoperoxidase activity. The protein is Myoglobin of Capra hircus (Goat).